The chain runs to 271 residues: Tryptophan synthase alpha chain (271 aa).

Active-site proton acceptor residues include Glu-49 and Asp-60.

This sequence belongs to the TrpA family. In terms of assembly, tetramer of two alpha and two beta chains.

The catalysed reaction is (1S,2R)-1-C-(indol-3-yl)glycerol 3-phosphate + L-serine = D-glyceraldehyde 3-phosphate + L-tryptophan + H2O. It participates in amino-acid biosynthesis; L-tryptophan biosynthesis; L-tryptophan from chorismate: step 5/5. Its function is as follows. The alpha subunit is responsible for the aldol cleavage of indoleglycerol phosphate to indole and glyceraldehyde 3-phosphate. This Burkholderia lata (strain ATCC 17760 / DSM 23089 / LMG 22485 / NCIMB 9086 / R18194 / 383) protein is Tryptophan synthase alpha chain.